A 415-amino-acid polypeptide reads, in one-letter code: Peptide chain release factor subunit 1-1 (415 aa).

Belongs to the eukaryotic release factor 1 family. As to quaternary structure, heterodimer of two subunits, one of which binds GTP.

The protein resides in the cytoplasm. Directs the termination of nascent peptide synthesis (translation) in response to the termination codons UAA, UAG and UGA. The sequence is that of Peptide chain release factor subunit 1-1 from Methanosarcina acetivorans (strain ATCC 35395 / DSM 2834 / JCM 12185 / C2A).